Here is a 161-residue protein sequence, read N- to C-terminus: Nuclear transcription factor Y subunit B-3 (161 aa).

A disordered region spans residues 1–23 (MADSDNDSGGHKDGGNASTREQD). Residue A2 is modified to N-acetylalanine. Residues 8 to 23 (SGGHKDGGNASTREQD) are compositionally biased toward basic and acidic residues. The DNA-binding element occupies 26 to 32 (LPIANVS). The interval 53–64 (VQECVSEFISFI) is subunit association domain (SAD). The tract at residues 114 to 146 (EKTTTAGRQGDKEGGGGGGGAGSGSGGAPMYGG) is disordered. A compositionally biased stretch (gly residues) spans 128-146 (GGGGGGAGSGSGGAPMYGG).

This sequence belongs to the NFYB/HAP3 subunit family. Heterotrimeric transcription factor composed of three components, NF-YA, NF-YB and NF-YC. NF-YB and NF-YC must interact and dimerize for NF-YA association and DNA binding. Component of a heat stress-inducible transcriptional complex with NF-YA and NF-YB subunits made, at least, of NFYA2, NFYB3 and DPB3-1 in cooperation with DREB2A. Binds directly with DPB3-1. In terms of tissue distribution, ubiquitous. Expressed in seedlings, petioles, hypocotyls, reproductive organ tissues and leaves.

Its subcellular location is the nucleus. It localises to the cytoplasm. It is found in the cytosol. Its function is as follows. Component of the NF-Y/HAP transcription factor complex. The NF-Y complex stimulates the transcription of various genes by recognizing and binding to a CCAAT motif in promoters. Promotes the expression of heat stress-inducible genes by contributing to the formation of a heat stress-specific transcriptional complex with NF-Y subunits (e.g. DPB3-1, NF-YA2 and NF-YB3) and DREB2A at the promoter of target genes, thus promoting heat tolerance. The chain is Nuclear transcription factor Y subunit B-3 from Arabidopsis thaliana (Mouse-ear cress).